Here is a 432-residue protein sequence, read N- to C-terminus: MGKNVVVLGTQWGDEGKGKVVDLLTERAKYVVRYQGGHNAGHTLVINGEKTVLHLIPSGILRENVISIIGNGVVLAPDALMKEMTELEARGVPVRERLLLSEACPLILPYHVALDNAREKARGAKAIGTTGRGIGPAYEDKVARRGLRVSDLFNKETFAIKLKEIVEYHNFQLVHYYKEAAVDYQKVLDDVLAIADILTAMVVDVSELLDNARKQGELIMFEGAQGTLLDIDHGTYPYVTSSNTTAGGVATGSGLGPRYVDYVLGIVKAYSTRVGAGPFPTELNDETGEFLRKQGNEYGATTGRSRRTGWLDIVAVRRAVQINSLSGFCMTKLDVLDGLKEVKLCIGYRMPDGREVDTTPLAAEGWEGIEPIYETMPGWSETTFGVKEHSKLPQAALNYIQRVEELTGVPIDIISTGPDRDETMILRDPFDA.

GTP contacts are provided by residues 13–19 (GDEGKGK) and 41–43 (GHT). Residue Asp-14 is the Proton acceptor of the active site. Residues Asp-14 and Gly-41 each coordinate Mg(2+). IMP contacts are provided by residues 14–17 (DEGK), 39–42 (NAGH), Thr-130, Arg-144, Gln-225, Thr-240, and Arg-304. The active-site Proton donor is the His-42. 300-306 (ATTGRSR) lines the substrate pocket. GTP is bound by residues Arg-306, 332 to 334 (KLD), and 415 to 417 (STG).

It belongs to the adenylosuccinate synthetase family. Homodimer. Mg(2+) is required as a cofactor.

It is found in the cytoplasm. It carries out the reaction IMP + L-aspartate + GTP = N(6)-(1,2-dicarboxyethyl)-AMP + GDP + phosphate + 2 H(+). The protein operates within purine metabolism; AMP biosynthesis via de novo pathway; AMP from IMP: step 1/2. Plays an important role in the de novo pathway of purine nucleotide biosynthesis. Catalyzes the first committed step in the biosynthesis of AMP from IMP. This Yersinia pseudotuberculosis serotype O:1b (strain IP 31758) protein is Adenylosuccinate synthetase.